A 229-amino-acid polypeptide reads, in one-letter code: Platelet-activating factor acetylhydrolase IB subunit alpha2 (229 aa).

Serine 2 carries the N-acetylserine modification. Serine 2 carries the phosphoserine modification. Serine 48 is an active-site residue. Serine 64 is subject to Phosphoserine. Catalysis depends on residues aspartate 193 and histidine 196. Position 220 is a phosphothreonine (threonine 220).

This sequence belongs to the 'GDSL' lipolytic enzyme family. Platelet-activating factor acetylhydrolase IB beta/gamma subunits subfamily. As to quaternary structure, forms a catalytic dimer which is either homodimer (alpha2/alpha2 homodimer) or heterodimer with PAFAH1B3 (alpha2/alpha1 heterodimer). Component of the cytosolic (PAF-AH (I)) heterotetrameric enzyme, which is composed of PAFAH1B1 (beta), PAFAH1B2 (alpha2) and PAFAH1B3 (alpha1) subunits. The catalytic activity of the enzyme resides in the alpha1 (PAFAH1B3) and alpha2 (PAFAH1B2) subunits, whereas the beta subunit (PAFAH1B1) has regulatory activity. Trimer formation is not essential for the catalytic activity. Interacts (homodimer form) with PAFAH1B1 (homodimer form); PAFAH1B2 competes with NDEL1 for PAFAH1B1 binding. Interacts with VLDLR; this interaction may modulate the Reelin pathway.

The protein localises to the cytoplasm. It carries out the reaction a 1-O-alkyl-2-acetyl-sn-glycero-3-phosphocholine + H2O = a 1-O-alkyl-sn-glycero-3-phosphocholine + acetate + H(+). The catalysed reaction is 1-O-hexadecyl-2-acetyl-sn-glycero-3-phosphocholine + H2O = 1-O-hexadecyl-sn-glycero-3-phosphocholine + acetate + H(+). The enzyme catalyses 1-O-hexadecyl-2-acetyl-sn-glycero-3-phosphate + H2O = 1-O-hexadecyl-sn-glycero-3-phosphate + acetate + H(+). It catalyses the reaction 1-O-hexadecyl-2-acetyl-sn-glycero-3-phosphoethanolamine + H2O = 1-O-hexadecyl-sn-glycero-3-phosphoethanolamine + acetate + H(+). Its activity is regulated as follows. Beta subunit (PAFAH1B1) stimulates the acetylhydrolase activity of the alpha2/alpha2 catalytic homodimer. Alpha2 catalytic subunit of the cytosolic type I platelet-activating factor (PAF) acetylhydrolase (PAF-AH (I)) heterotetrameric enzyme that catalyzes the hydrolyze of the acetyl group at the sn-2 position of PAF and its analogs and modulates the action of PAF. The activity and substrate specificity of PAF-AH (I) are affected by its subunit composition. The alpha2/alpha2 homodimer (PAFAH1B2/PAFAH1B2 homodimer) hydrolyzes PAF and 1-O-alkyl-2-acetyl-sn-glycero-3-phosphorylethanolamine (AAGPE) more efficiently than 1-O-alkyl-2-acetyl-sn-glycero-3-phosphoric acid (AAGPA). In contrast, the alpha1/alpha2 heterodimer(PAFAH1B3/PAFAH1B3 heterodimer) hydrolyzes AAGPA more efficiently than PAF, but has little hydrolytic activity towards AAGPE. May play a role in male germ cell meiosis during the late pachytenestage and meiotic divisions as well as early spermiogenesis. The chain is Platelet-activating factor acetylhydrolase IB subunit alpha2 from Mus musculus (Mouse).